The chain runs to 579 residues: Eukaryotic translation initiation factor 3 subunit D (579 aa).

3 disordered regions span residues 1 to 20 (MASFKLPELQPDNDLWGPAS), 51 to 72 (NASGASNDAANARGGRQGRARD), and 109 to 170 (RRGG…FGWK). The span at 51–64 (NASGASNDAANARG) shows a compositional bias: low complexity. The span at 120–167 (GGRGGRGGAGGAGAAGGRGASKFGAGAGRGARGGRGGAAGARRGGGRF) shows a compositional bias: gly residues. The segment at 307-321 (AFDYLTVNENAADPP) is RNA gate.

The protein belongs to the eIF-3 subunit D family. As to quaternary structure, component of the eukaryotic translation initiation factor 3 (eIF-3) complex.

It is found in the cytoplasm. Functionally, mRNA cap-binding component of the eukaryotic translation initiation factor 3 (eIF-3) complex, which is involved in protein synthesis of a specialized repertoire of mRNAs and, together with other initiation factors, stimulates binding of mRNA and methionyl-tRNAi to the 40S ribosome. The eIF-3 complex specifically targets and initiates translation of a subset of mRNAs involved in cell proliferation. In the eIF-3 complex, eif3d specifically recognizes and binds the 7-methylguanosine cap of a subset of mRNAs. The protein is Eukaryotic translation initiation factor 3 subunit D of Mycosarcoma maydis (Corn smut fungus).